The following is a 187-amino-acid chain: Elongation factor P (187 aa).

It belongs to the elongation factor P family.

It localises to the cytoplasm. It functions in the pathway protein biosynthesis; polypeptide chain elongation. Its function is as follows. Involved in peptide bond synthesis. Stimulates efficient translation and peptide-bond synthesis on native or reconstituted 70S ribosomes in vitro. Probably functions indirectly by altering the affinity of the ribosome for aminoacyl-tRNA, thus increasing their reactivity as acceptors for peptidyl transferase. In Mycolicibacterium smegmatis (strain ATCC 700084 / mc(2)155) (Mycobacterium smegmatis), this protein is Elongation factor P.